The sequence spans 91 residues: Small ribosomal subunit protein uS15 (91 aa).

This sequence belongs to the universal ribosomal protein uS15 family. In terms of assembly, part of the 30S ribosomal subunit. Forms a bridge to the 50S subunit in the 70S ribosome, contacting the 23S rRNA.

In terms of biological role, one of the primary rRNA binding proteins, it binds directly to 16S rRNA where it helps nucleate assembly of the platform of the 30S subunit by binding and bridging several RNA helices of the 16S rRNA. Forms an intersubunit bridge (bridge B4) with the 23S rRNA of the 50S subunit in the ribosome. This chain is Small ribosomal subunit protein uS15, found in Deinococcus geothermalis (strain DSM 11300 / CIP 105573 / AG-3a).